A 261-amino-acid chain; its full sequence is Indole-3-glycerol phosphate synthase (261 aa).

The protein belongs to the TrpC family.

It carries out the reaction 1-(2-carboxyphenylamino)-1-deoxy-D-ribulose 5-phosphate + H(+) = (1S,2R)-1-C-(indol-3-yl)glycerol 3-phosphate + CO2 + H2O. It participates in amino-acid biosynthesis; L-tryptophan biosynthesis; L-tryptophan from chorismate: step 4/5. This chain is Indole-3-glycerol phosphate synthase, found in Burkholderia mallei (strain NCTC 10247).